An 829-amino-acid polypeptide reads, in one-letter code: Telomere length regulation protein TEL2 homolog (829 aa).

Disordered stretches follow at residues 446–493 and 620–641; these read SADF…DDLV and SEKP…PHSI. Low complexity predominate over residues 456–466; the sequence is SSPSKSPLSSP. The segment covering 467 to 480 has biased composition (basic and acidic residues); that stretch reads EVREKSKVKVKADQ. A compositionally biased stretch (acidic residues) spans 482-493; it reads SDSDLDSDDDLV. Residues 629–641 show a composition bias toward polar residues; the sequence is AESGSVNTDPHSI.

The protein belongs to the TEL2 family.

It is found in the cytoplasm. It localises to the membrane. The protein resides in the nucleus. The protein localises to the chromosome. Its subcellular location is the telomere. Functionally, regulator of the DNA damage response (DDR). Part of the TTT complex that is required to stabilize protein levels of the phosphatidylinositol 3-kinase-related protein kinase (PIKK) family proteins. Promotes assembly, stabilizes and maintains the activity of TORC complexes, which regulate cell growth and survival in response to nutrient and hormonal signals. May be involved in telomere length regulation. The polypeptide is Telomere length regulation protein TEL2 homolog (telo2) (Xenopus tropicalis (Western clawed frog)).